The primary structure comprises 108 residues: Transcriptional activator HlyU (108 aa).

The 95-residue stretch at 13-107 (EMEKNSAKAV…LLHRLYCQAN (95 aa)) folds into the HTH arsR-type domain. Residues 47–66 (VGELSSRLELSQSALSQHLA) constitute a DNA-binding region (H-T-H motif).

Functionally, up-regulates the expression of the hemolysin gene, hlyA, and may promote expression of other virulence determinants in vivo. It may have both positive and negative regulator activities. This chain is Transcriptional activator HlyU (hlyU), found in Vibrio cholerae serotype O1 (strain ATCC 39315 / El Tor Inaba N16961).